We begin with the raw amino-acid sequence, 32 residues long: C-reactive protein (32 aa).

The Pentraxin (PTX) domain maps to 2-32 (VIKTLVFQSESNNSFVELIPMKPLNLRAFXL).

The protein belongs to the pentraxin family. Homopentamer. Pentraxin (or pentaxin) have a discoid arrangement of 5 non-covalently bound subunits. In terms of processing, glycosylated.

The protein localises to the secreted. In terms of biological role, displays several functions associated with host defense: it promotes agglutination, bacterial capsular swelling, phagocytosis, and complement fixation through its calcium-dependent binding to phosphorylcholine. This is C-reactive protein from Pleuronectes platessa (European plaice).